The primary structure comprises 251 residues: Probable transcriptional regulatory protein MLBr00475 (251 aa).

Belongs to the TACO1 family.

Its subcellular location is the cytoplasm. The polypeptide is Probable transcriptional regulatory protein MLBr00475 (Mycobacterium leprae (strain Br4923)).